Reading from the N-terminus, the 86-residue chain is Putative defensin-like protein 234 (86 aa).

The N-terminal stretch at 1 to 26 is a signal peptide; that stretch reads MRSATLLLVSCVLLSFILGNVKEVEA. 4 disulfides stabilise this stretch: cysteine 34–cysteine 86, cysteine 44–cysteine 71, cysteine 52–cysteine 80, and cysteine 69–cysteine 82.

This sequence belongs to the DEFL family.

It localises to the secreted. This chain is Putative defensin-like protein 234 (SCRL14), found in Arabidopsis thaliana (Mouse-ear cress).